Consider the following 1774-residue polypeptide: Protein TIC 214 (1774 aa).

The next 6 membrane-spanning stretches (helical) occupy residues 19-39, 68-88, 91-111, 133-153, 176-196, and 227-247; these read IINS…FSIG, FIAG…HLAL, PHTI…WNNH, VFLN…SSML, VGWL…LVWI, and IFSI…PSPI. Residues 254-268 show a composition bias toward basic and acidic residues; sequence GTSETEERGGTKQDQ. A disordered region spans residues 254-275; the sequence is GTSETEERGGTKQDQEVSTEEA.

It belongs to the TIC214 family. As to quaternary structure, part of the Tic complex.

It localises to the plastid. It is found in the chloroplast inner membrane. Its function is as follows. Involved in protein precursor import into chloroplasts. May be part of an intermediate translocation complex acting as a protein-conducting channel at the inner envelope. This chain is Protein TIC 214, found in Aethionema cordifolium (Lebanon stonecress).